The primary structure comprises 70 residues: Melittin (70 aa).

Positions 1 to 21 (MKFLVNVALVFMVVYISYIYA) are cleaved as a signal peptide. The propeptide at 22 to 43 (APEPEPAPEPEAEADAEADPEA) is removed by a dipeptidylpeptidase. The residue at position 44 (glycine 44) is an N-formylglycine; partial. Residue glutamine 69 is modified to Glutamine amide.

Belongs to the melittin family. In terms of assembly, monomer (in solution and for integration into membranes), homotetramer (in solution and potentially as a toroidal pore in membranes), and potenially homomultimer (as a toroidal pore in membranes). In terms of tissue distribution, expressed by the venom gland.

Its subcellular location is the secreted. It is found in the target cell membrane. Melittin: Main toxin of bee venom with strong antimicrobial activity and hemolytic activity. It has enhancing effects on bee venom phospholipase A2 activity. This amphipathic toxin binds to negatively charged membrane surface and forms pore by inserting into lipid bilayers inducing the leakage of ions and molecules and the enhancement of permeability that ultimately leads to cell lysis. It acts as a voltage-gated pore with higher selectivity for anions over cations. The ion conductance has been shown to be voltage-dependent. Self-association of melittin in membranes is promoted by high ionic strength, but not by the presence of negatively charged lipids. In vivo, intradermal injection into healthy human volunteers produce sharp pain sensation and an inflammatory response. It produces pain by activating primary nociceptor cells directly and indirectly due to its ability to activate plasma membrane phospholipase A2 and its pore-forming activity. In the context of inflammation and cancer tests, is highly cytotoxic to normal cells, highly induces calcium signaling and almost completely prevents cAMP production. In addition, prevents LPS-induced nitric oxid (NO) synthesis but does not affect the IP3 signaling and pro-inflammatory activation of endothelial cells. Also shows significant antiproliferative activity on the breast cancer cell line MDA-MB-231. In terms of biological role, melittin-S: 1.4-fold less hemolytic and adopts a less organized secondary structure than melittin. Functionally, melittin-2: Has strong hemolytic activity. The protein is Melittin (MELT) of Apis mellifera (Honeybee).